The chain runs to 252 residues: uncharacterized protein (252 aa).

The protein localises to the plastid. It localises to the chloroplast. This is an uncharacterized protein from Guillardia theta (Cryptophyte).